Consider the following 515-residue polypeptide: 2-isopropylmalate synthase (515 aa).

Residues Ile-4–Lys-266 form the Pyruvate carboxyltransferase domain. Mn(2+) contacts are provided by Asp-13, His-201, His-203, and Asn-237. The tract at residues Glu-391 to Val-515 is regulatory domain.

It belongs to the alpha-IPM synthase/homocitrate synthase family. LeuA type 1 subfamily. Homodimer. Requires Mn(2+) as cofactor.

Its subcellular location is the cytoplasm. It catalyses the reaction 3-methyl-2-oxobutanoate + acetyl-CoA + H2O = (2S)-2-isopropylmalate + CoA + H(+). Its pathway is amino-acid biosynthesis; L-leucine biosynthesis; L-leucine from 3-methyl-2-oxobutanoate: step 1/4. Its function is as follows. Catalyzes the condensation of the acetyl group of acetyl-CoA with 3-methyl-2-oxobutanoate (2-ketoisovalerate) to form 3-carboxy-3-hydroxy-4-methylpentanoate (2-isopropylmalate). The chain is 2-isopropylmalate synthase from Halalkalibacterium halodurans (strain ATCC BAA-125 / DSM 18197 / FERM 7344 / JCM 9153 / C-125) (Bacillus halodurans).